We begin with the raw amino-acid sequence, 1224 residues long: DNA-directed RNA polymerase subunit beta'' (1224 aa).

4 residues coordinate Zn(2+): cysteine 233, cysteine 308, cysteine 315, and cysteine 318.

Belongs to the RNA polymerase beta' chain family. RpoC2 subfamily. As to quaternary structure, in plastids the minimal PEP RNA polymerase catalytic core is composed of four subunits: alpha, beta, beta', and beta''. When a (nuclear-encoded) sigma factor is associated with the core the holoenzyme is formed, which can initiate transcription. It depends on Zn(2+) as a cofactor.

The protein localises to the plastid. It localises to the chloroplast. It catalyses the reaction RNA(n) + a ribonucleoside 5'-triphosphate = RNA(n+1) + diphosphate. DNA-dependent RNA polymerase catalyzes the transcription of DNA into RNA using the four ribonucleoside triphosphates as substrates. This Pinus thunbergii (Japanese black pine) protein is DNA-directed RNA polymerase subunit beta''.